The primary structure comprises 288 residues: Acetyl-coenzyme A carboxylase carboxyl transferase subunit beta (288 aa).

Residues 32–288 (MWAKCPSCKR…LRLHSLEGWR (257 aa)) enclose the CoA carboxyltransferase N-terminal domain. Residues Cys-36, Cys-39, Cys-54, and Cys-57 each coordinate Zn(2+). Residues 36–57 (CPSCKRTLYTKEMGAEKICPHC) form a C4-type zinc finger.

The protein belongs to the AccD/PCCB family. As to quaternary structure, acetyl-CoA carboxylase is a heterohexamer composed of biotin carboxyl carrier protein (AccB), biotin carboxylase (AccC) and two subunits each of ACCase subunit alpha (AccA) and ACCase subunit beta (AccD). Requires Zn(2+) as cofactor.

Its subcellular location is the cytoplasm. The enzyme catalyses N(6)-carboxybiotinyl-L-lysyl-[protein] + acetyl-CoA = N(6)-biotinyl-L-lysyl-[protein] + malonyl-CoA. The protein operates within lipid metabolism; malonyl-CoA biosynthesis; malonyl-CoA from acetyl-CoA: step 1/1. In terms of biological role, component of the acetyl coenzyme A carboxylase (ACC) complex. Biotin carboxylase (BC) catalyzes the carboxylation of biotin on its carrier protein (BCCP) and then the CO(2) group is transferred by the transcarboxylase to acetyl-CoA to form malonyl-CoA. The chain is Acetyl-coenzyme A carboxylase carboxyl transferase subunit beta from Enterococcus faecalis (strain ATCC 700802 / V583).